The sequence spans 103 residues: Large ribosomal subunit protein uL24 (103 aa).

This sequence belongs to the universal ribosomal protein uL24 family. Part of the 50S ribosomal subunit.

In terms of biological role, one of two assembly initiator proteins, it binds directly to the 5'-end of the 23S rRNA, where it nucleates assembly of the 50S subunit. Its function is as follows. One of the proteins that surrounds the polypeptide exit tunnel on the outside of the subunit. This Corynebacterium urealyticum (strain ATCC 43042 / DSM 7109) protein is Large ribosomal subunit protein uL24.